Reading from the N-terminus, the 540-residue chain is Chaperonin GroEL (540 aa).

ATP is bound by residues 30–33, K51, 87–91, G415, 479–481, and D495; these read TLGP, DGTTT, and NAA.

This sequence belongs to the chaperonin (HSP60) family. Forms a cylinder of 14 subunits composed of two heptameric rings stacked back-to-back. Interacts with the co-chaperonin GroES.

It is found in the cytoplasm. The enzyme catalyses ATP + H2O + a folded polypeptide = ADP + phosphate + an unfolded polypeptide.. Together with its co-chaperonin GroES, plays an essential role in assisting protein folding. The GroEL-GroES system forms a nano-cage that allows encapsulation of the non-native substrate proteins and provides a physical environment optimized to promote and accelerate protein folding. The polypeptide is Chaperonin GroEL (Pectobacterium carotovorum subsp. carotovorum (Erwinia carotovora subsp. carotovora)).